The sequence spans 2139 residues: Voltage-dependent L-type calcium channel subunit alpha-1C (2139 aa).

Residues 1–20 (MVNENTRMYVPEENHQGSNY) form a disordered region. At 1–124 (MVNENTRMYV…RACISIVEWK (124 aa)) the chain is on the cytoplasmic side. The tract at residues 47 to 68 (GAALSWQAAIDAARQAKLMGSA) is calmodulin-binding. The disordered stretch occupies residues 73-98 (ISTVSSTQRKRQQYGKPKKQGGTTAT). Residues 80–91 (QRKRQQYGKPKK) show a composition bias toward basic residues. Residues 111 to 408 (NPIRRACISI…LVLGVLSGEF (298 aa)) form an I repeat. Residues 125-143 (PFEIIILLTIFANCVALAI) form a helical membrane-spanning segment. The Extracellular portion of the chain corresponds to 144-158 (YIPFPEDDSNATNSN). The N-linked (GlcNAc...) asparagine glycan is linked to N153. A helical membrane pass occupies residues 159–179 (LERVEYLFLIIFTVEAFLKVI). At 180-188 (AYGLLFHPN) the chain is on the cytoplasmic side. A helical membrane pass occupies residues 189 to 209 (AYLRNGWNLLDFIIVVVGLFS). Residues 210-232 (AILEQATKADGANALGGKGAGFD) lie on the Extracellular side of the membrane. A helical transmembrane segment spans residues 233–251 (VKALRAFRVLRPLRLVSGV). Residues 252 to 268 (PSLQVVLNSIIKAMVPL) lie on the Cytoplasmic side of the membrane. Residues 269 to 290 (LHIALLVLFVIIIYAIIGLELF) traverse the membrane as a helical segment. The Extracellular portion of the chain corresponds to 291–350 (MGKMHKTCYNQEGIIDVPAEEDPSPCALETGHGRQCQNGTVCKPGWDGPKHGITNFDNFA). Disulfide bonds link C298–C326 and C316–C332. N328 carries an N-linked (GlcNAc...) asparagine glycan. An intramembrane region (pore-forming) is located at residues 351–372 (FAMLTVFQCITMEGWTDVLYWM). Residues 361–364 (TMEG) carry the Selectivity filter of repeat I motif. Residue E363 coordinates Ca(2+). The Extracellular portion of the chain corresponds to 373 to 380 (QDAMGYEL). Residues 381–401 (PWVYFVSLVIFGSFFVLNLVL) traverse the membrane as a helical segment. Residues 402–524 (GVLSGEFSKE…RKCRAAVKSN (123 aa)) lie on the Cytoplasmic side of the membrane. Positions 428-445 (QQLEEDLKGYLDWITQAE) are AID/alpha-interaction domain; mediates interaction with the beta subunit. Residues 449-481 (PENEDEGMDEDKPRNMSMPTSETESVNTENVAG) form a disordered region. The segment covering 465 to 478 (SMPTSETESVNTEN) has biased composition (polar residues). Phosphoserine is present on S469. T476 carries the phosphothreonine modification. One copy of the II repeat lies at 510–756 (NRFCRRKCRA…VFLAIAVDNL (247 aa)). Residues 525–543 (VFYWLVIFLVFLNTLTIAS) traverse the membrane as a helical segment. At 544–554 (EHYNQPHWLTE) the chain is on the extracellular side. The chain crosses the membrane as a helical span at residues 555-575 (VQDTANKALLALFTAEMLLKM). Topologically, residues 576 to 586 (YSLGLQAYFVS) are cytoplasmic. A helical transmembrane segment spans residues 587-606 (LFNRFDCFIVCGGILETILV). The Extracellular segment spans residues 607–615 (ETKIMSPLG). The chain crosses the membrane as a helical span at residues 616–634 (ISVLRCVRLLRIFKITRYW). The Cytoplasmic portion of the chain corresponds to 635–653 (NSLSNLVASLLNSVRSIAS). The chain crosses the membrane as a helical span at residues 654-673 (LLLLLFLFIIIFSLLGMQLF). Residues 674–693 (GGKFNFDEMQTRRSTFDNFP) lie on the Extracellular side of the membrane. An intramembrane region (pore-forming) is located at residues 694-715 (QSLLTVFQILTGEDWNSVMYDG). The short motif at 704–707 (TGED) is the Selectivity filter of repeat II element. E706 contributes to the Ca(2+) binding site. At 716-725 (IMAYGGPSFP) the chain is on the extracellular side. Residues 726 to 745 (GMLVCIYFIILFICGNYILL) form a helical membrane-spanning segment. The Cytoplasmic portion of the chain corresponds to 746–900 (NVFLAIAVDN…LQCHRIVNDT (155 aa)). A disordered region spans residues 764–861 (SAQKEEEEEK…EMPVGPRPRP (98 aa)). The segment covering 783–806 (SPEKKQEVMEKPAVEESKEEKIEL) has biased composition (basic and acidic residues). Phosphoserine is present on residues S808 and S815. The interaction with STAC2 stretch occupies residues 829 to 876 (SENEDKSPHSNPDTAGEEDEEEPEMPVGPRPRPLSELHLKEKAVPMPE). The span at 843-852 (AGEEDEEEPE) shows a compositional bias: acidic residues. An III repeat occupies 887–1169 (NRFRLQCHRI…IFVGFVIVTF (283 aa)). The chain crosses the membrane as a helical span at residues 901 to 919 (IFTNLILFFILLSSISLAA). Topologically, residues 920 to 931 (EDPVQHTSFRNH) are extracellular. A helical membrane pass occupies residues 932–951 (ILGNADYVFTSIFTLEIILK). At 952–967 (MTAYGAFLHKGSFCRN) the chain is on the cytoplasmic side. The chain crosses the membrane as a helical span at residues 968-986 (YFNILDLLVVSVSLISFGI). Residues 987–993 (QSSAINV) are Extracellular-facing. The chain crosses the membrane as a helical span at residues 994 to 1012 (VKILRVLRVLRPLRAINRA). Over 1013–1031 (KGLKHVVQCVFVAIRTIGN) the chain is Cytoplasmic. Residues 1032-1051 (IVIVTTLLQFMFACIGVQLF) form a helical membrane-spanning segment. Residues 1052 to 1101 (KGKLYTCSDSSKQTEAECKGNYITYKDGEVDHPIIQPRSWENSKFDFDNV) lie on the Extracellular side of the membrane. A disulfide bridge connects residues C1058 and C1069. The segment at 1089 to 1178 (RSWENSKFDF…FQEQGEQEYK (90 aa)) is dihydropyridine binding. Positions 1102 to 1122 (LAAMMALFTVSTFEGWPELLY) form an intramembrane region, pore-forming. Residues 1113-1116 (TFEG) carry the Selectivity filter of repeat III motif. Residue E1115 coordinates Ca(2+). Residues 1123-1139 (RSIDSHTEDKGPIYNYR) lie on the Extracellular side of the membrane. A helical membrane pass occupies residues 1140–1161 (VEISIFFIIYIIIIAFFMMNIF). Topologically, residues 1162-1219 (VGFVIVTFQEQGEQEYKNCELDKNQRQCVEYALKARPLRRYIPKNQHQYKVWYVVNST) are cytoplasmic. The stretch at 1206–1479 (NQHQYKVWYV…LFVAVIMDNF (274 aa)) is one IV repeat. Residues 1220–1241 (YFEYLMFVLILLNTICLAMQHY) traverse the membrane as a helical segment. The Extracellular portion of the chain corresponds to 1242 to 1249 (GQSCLFKI). The chain crosses the membrane as a helical span at residues 1250 to 1271 (AMNILNMLFTGLFTVEMILKLI). At 1272 to 1281 (AFKPKGYFSD) the chain is on the cytoplasmic side. Residues 1282–1301 (PWNVFDFLIVIGSIIDVILS) traverse the membrane as a helical segment. Residues 1302-1324 (ETNPAEHTQCSPSMSAEENSRIS) are Extracellular-facing. The chain crosses the membrane as a helical span at residues 1325-1343 (ITFFRLFRVMRLVKLLSRG). The Cytoplasmic segment spans residues 1344–1361 (EGIRTLLWTFIKSFQALP). The helical transmembrane segment at 1362-1382 (YVALLIVMLFFIYAVIGMQVF) threads the bilayer. The Extracellular portion of the chain corresponds to 1383–1404 (GKIALNDTTEINRNNNFQTFPQ). N1388 carries an N-linked (GlcNAc...) asparagine glycan. Residues 1405–1423 (AVLLLFRCATGEAWQDIML) constitute an intramembrane region (pore-forming). A Selectivity filter of repeat IV motif is present at residues 1414–1417 (TGEA). The Extracellular segment spans residues 1424 to 1451 (ACMPGKKCAPESEPSNSTEGETPCGSSF). The segment at 1430-1498 (KCAPESEPSN…LGPHHLDEFK (69 aa)) is dihydropyridine binding. Cysteines 1431 and 1447 form a disulfide. N1439 is a glycosylation site (N-linked (GlcNAc...) asparagine). Positions 1444–1486 (ETPCGSSFAVFYFISFYMLCAFLIINLFVAVIMDNFDYLTRDW) are phenylalkylamine binding. The helical transmembrane segment at 1452–1476 (AVFYFISFYMLCAFLIINLFVAVIM) threads the bilayer. Residues 1477–2139 (DNFDYLTRDW…ADSRSYVSNL (663 aa)) lie on the Cytoplasmic side of the membrane. The tract at residues 1611 to 1638 (DEVTVGKFYATFLIQEYFRKFKKRKEQG) is important for interaction with STAC1, STAC2 and STAC3. Positions 1611–1644 (DEVTVGKFYATFLIQEYFRKFKKRKEQGLVGKPS) are calmodulin-binding. Residues 1617–1637 (KFYATFLIQEYFRKFKKRKEQ) are calmodulin-binding IQ region. The tract at residues 1651 to 1670 (LQAGLRTLHDIGPEIRRAIS) is important for localization in at the junctional membrane. A phosphoserine mark is found at S1670 and S1691. Composition is skewed to polar residues over residues 1732-1741 (KTGNNQADTE) and 1751-1763 (STFT…STGS). Residues 1732–1773 (KTGNNQADTESPSHEKLVDSTFTPSSYSSTGSNANINNANNT) form a disordered region. The segment covering 1764–1773 (NANINNANNT) has biased composition (low complexity). S1897 carries the phosphoserine; by PKA modification. Residues 1940 to 1966 (RSHSPTTFPRPCPTPPVTPGSRGRPLR) form a disordered region. The span at 1947-1957 (FPRPCPTPPVT) shows a compositional bias: pro residues.

Belongs to the calcium channel alpha-1 subunit (TC 1.A.1.11) family. CACNA1C subfamily. Component of a calcium channel complex consisting of a pore-forming alpha subunit (CACNA1C) and ancillary beta, gamma and delta subunits. The channel complex contains alpha, beta, gamma and delta subunits in a 1:1:1:1 ratio, i.e. it contains only one of each type of subunit. CACNA1C channel activity is modulated by ancillary subunits, such as CACNB1, CACNB2, CACNB3, CACNA2D1 and CACNA2D4. Interacts with the gamma subunits CACNG4, CACNG6, CACNG7 and CACNG8. Interacts with CACNB1. Interacts with CACNB2. Identified in a complex with CACNA2D4 and CACNB3. Interacts with CACNB3. Interacts with CACNA2D1. Interacts with CACNA2D4. Interacts with CALM1. Interacts (via the N-terminus and the C-terminal C and IQ motifs) with CABP1; this inhibits Ca(2+)-dependent channel inactivation. The binding via the C motif is calcium independent whereas the binding via IQ requires the presence of calcium and is mutually exclusive with calmodulin binding. The binding to the cytoplasmic N-terminal domain is calcium independent but is essential for the channel modulation. Interacts (via C-terminal CDB motif) with CABP5; in a calcium-dependent manner. Interacts with CIB1; the interaction increases upon cardiomyocytes hypertrophy. Interacts with STAC2 and STAC3; this inhibits channel inactivation. Post-translationally, phosphorylation by PKA at Ser-1897 activates the channel. Elevated levels of blood glucose lead to increased phosphorylation by PKA. As to expression, detected in embryonic heart. Detected in retina in rod bipolar cells. Detected in tibialis artery (at protein level). Detected in smooth muscle cells from tibialis artery and in mesenteric artery. High expression in heart, followed by brain and spinal cord.

It localises to the cell membrane. Its subcellular location is the sarcolemma. The protein localises to the perikaryon. It is found in the postsynaptic density membrane. The protein resides in the cell projection. It localises to the dendrite. Its subcellular location is the T-tubule. The catalysed reaction is Ca(2+)(in) = Ca(2+)(out). Its activity is regulated as follows. Inhibited by dihydropyridines (DHP), such as isradipine. Inhibited by nifedipine. Channel activity is regulated by Ca(2+) and calmodulin. Binding of STAC1, STAC2 or STAC3 to a region that overlaps with the calmodulin binding site inhibits channel inactivation by Ca(2+) and calmodulin. Binding of calmodulin or CABP1 at the same regulatory sites results in opposite effects on the channel function. Shear stress and pressure increases calcium channel activity. Pore-forming, alpha-1C subunit of the voltage-gated calcium channel that gives rise to L-type calcium currents. Mediates influx of calcium ions into the cytoplasm, and thereby triggers calcium release from the sarcoplasm. Plays an important role in excitation-contraction coupling in the heart. Required for normal heart development and normal regulation of heart rhythm. Required for normal contraction of smooth muscle cells in blood vessels and in the intestine. Essential for normal blood pressure regulation via its role in the contraction of arterial smooth muscle cells. Long-lasting (L-type) calcium channels belong to the 'high-voltage activated' (HVA) group. This Mus musculus (Mouse) protein is Voltage-dependent L-type calcium channel subunit alpha-1C (Cacna1c).